Here is a 123-residue protein sequence, read N- to C-terminus: Holo-[acyl-carrier-protein] synthase (123 aa).

Mg(2+) is bound by residues Asp-8 and Glu-55.

It belongs to the P-Pant transferase superfamily. AcpS family. Mg(2+) is required as a cofactor.

Its subcellular location is the cytoplasm. It carries out the reaction apo-[ACP] + CoA = holo-[ACP] + adenosine 3',5'-bisphosphate + H(+). Functionally, transfers the 4'-phosphopantetheine moiety from coenzyme A to a Ser of acyl-carrier-protein. The sequence is that of Holo-[acyl-carrier-protein] synthase from Caldicellulosiruptor saccharolyticus (strain ATCC 43494 / DSM 8903 / Tp8T 6331).